The following is a 420-amino-acid chain: Phosphoribosylamine--glycine ligase (420 aa).

Residues 108–314 (KQFMEKYAIP…FAALIAALLN (207 aa)) form the ATP-grasp domain. ATP is bound at residue 134 to 195 (LDERGVPIVI…EDFLAGEEFS (62 aa)). Mg(2+) contacts are provided by Glu284 and Asn286.

The protein belongs to the GARS family. Requires Mg(2+) as cofactor. It depends on Mn(2+) as a cofactor.

The enzyme catalyses 5-phospho-beta-D-ribosylamine + glycine + ATP = N(1)-(5-phospho-beta-D-ribosyl)glycinamide + ADP + phosphate + H(+). Its pathway is purine metabolism; IMP biosynthesis via de novo pathway; N(1)-(5-phospho-D-ribosyl)glycinamide from 5-phospho-alpha-D-ribose 1-diphosphate: step 2/2. The sequence is that of Phosphoribosylamine--glycine ligase from Listeria innocua serovar 6a (strain ATCC BAA-680 / CLIP 11262).